The chain runs to 381 residues: Sulfate adenylyltransferase (381 aa).

Belongs to the sulfate adenylyltransferase family.

The catalysed reaction is sulfate + ATP + H(+) = adenosine 5'-phosphosulfate + diphosphate. The protein operates within sulfur metabolism; hydrogen sulfide biosynthesis; sulfite from sulfate: step 1/3. The polypeptide is Sulfate adenylyltransferase (Carboxydothermus hydrogenoformans (strain ATCC BAA-161 / DSM 6008 / Z-2901)).